The following is a 570-amino-acid chain: Zeta-carotene desaturase, chloroplastic/chromoplastic (570 aa).

Low complexity predominate over residues 1 to 16 (MASVAATTTLAPALAP). Residues 1 to 33 (MASVAATTTLAPALAPRRARPGTGLVPPRRASA) form a disordered region.

The protein belongs to the zeta carotene desaturase family. The cofactor is NAD(+). NADP(+) serves as cofactor. Requires FAD as cofactor.

Its subcellular location is the plastid. The protein resides in the chloroplast. The protein localises to the chromoplast. It catalyses the reaction 9,9'-di-cis-zeta-carotene + 2 a quinone = 7,7',9,9'-tetra-cis-lycopene + 2 a quinol. It functions in the pathway carotenoid biosynthesis; lycopene biosynthesis. Its function is as follows. Catalyzes the conversion of zeta-carotene to lycopene via the intermediary of neurosporene. It carries out two consecutive desaturations (introduction of double bonds) at positions C-7 and C-7'. In Zea mays (Maize), this protein is Zeta-carotene desaturase, chloroplastic/chromoplastic (ZDS1).